Reading from the N-terminus, the 859-residue chain is DNA mismatch repair protein MutS (859 aa).

618–625 (GPNMGGKS) serves as a coordination point for ATP. The disordered stretch occupies residues 803 to 829 (RDHDVQQNTEQQGTQQNMSFVPSAPSP). Residues 808–819 (QQNTEQQGTQQN) are compositionally biased toward low complexity.

This sequence belongs to the DNA mismatch repair MutS family.

Functionally, this protein is involved in the repair of mismatches in DNA. It is possible that it carries out the mismatch recognition step. This protein has a weak ATPase activity. This is DNA mismatch repair protein MutS from Shewanella pealeana (strain ATCC 700345 / ANG-SQ1).